Consider the following 358-residue polypeptide: Molybdenum import ATP-binding protein ModC (358 aa).

One can recognise an ABC transporter domain in the interval 2–234 (NDDISASFFS…PDLPLAHLEE (233 aa)). 34–41 (GRSGSGKT) lines the ATP pocket. The region spanning 293–358 (LSSISNCIPV…AQVKSVALID (66 aa)) is the Mop domain.

The protein belongs to the ABC transporter superfamily. Molybdate importer (TC 3.A.1.8) family. In terms of assembly, the complex is composed of two ATP-binding proteins (ModC), two transmembrane proteins (ModB) and a solute-binding protein (ModA).

It localises to the cell inner membrane. The catalysed reaction is molybdate(out) + ATP + H2O = molybdate(in) + ADP + phosphate + H(+). Part of the ABC transporter complex ModABC involved in molybdenum import. Responsible for energy coupling to the transport system. The sequence is that of Molybdenum import ATP-binding protein ModC from Hahella chejuensis (strain KCTC 2396).